We begin with the raw amino-acid sequence, 347 residues long: MTAEKSKALAAALAQIEKQFGKGSIMRMGDGEAAEDIQVVSTGSLGLDIALGVGGLPRGRVVEIYGPESSGKTTLTLQVIAELQKLGGTAAFIDAEHALDVQYAAKLGVNVPELLISQPDTGEQALEITDALVRSGSIDMIVIDSVAALVPKAEIEGEMGDSLPGLQARLMSQALRKLTGTIKRTNCLVIFINQIRMKIGVMFGNPETTTGGNALKFYSSVRLDIRRIGSIKKNDEVIGNETRVKVVKNKVSPPFREAIFDILYGEGISRQGEIIDLGVQAKIVDKAGAWYSYNGEKIGQGKDNAREFLRENPEIAREIENRIRESLGVVAMPDGAGNEAEAMDEEE.

An ATP-binding site is contributed by 66–73; it reads GPESSGKT.

The protein belongs to the RecA family.

It localises to the cytoplasm. Can catalyze the hydrolysis of ATP in the presence of single-stranded DNA, the ATP-dependent uptake of single-stranded DNA by duplex DNA, and the ATP-dependent hybridization of homologous single-stranded DNAs. It interacts with LexA causing its activation and leading to its autocatalytic cleavage. The chain is Protein RecA from Burkholderia cepacia (Pseudomonas cepacia).